Consider the following 155-residue polypeptide: Ribosome maturation factor RimP (155 aa).

This sequence belongs to the RimP family.

It localises to the cytoplasm. Functionally, required for maturation of 30S ribosomal subunits. The chain is Ribosome maturation factor RimP from Staphylococcus haemolyticus (strain JCSC1435).